A 536-amino-acid polypeptide reads, in one-letter code: Metal transporter Nramp2 (536 aa).

A disordered region spans residues 1–37 (MSSPSGGEDSKDDEKDEESNRLLPLSSSSQSQSLQSE). Over residues 22 to 36 (LLPLSSSSQSQSLQS) the composition is skewed to low complexity. A glycan (N-linked (GlcNAc...) asparagine) is linked at Asn38. The next 12 membrane-spanning stretches (helical) occupy residues 76–96 (LWLF…PGNL), 104–124 (AIAG…GLLI), 161–181 (VALI…IQIL), 185–205 (FLPL…FLFL), 213–233 (LEGV…WMCG), 259–279 (AVGV…SALV), 305–325 (VALF…AKGF), 347–367 (YGGG…AAGQ), 400–420 (SFAI…EASL), 435–455 (IPFA…MGVF), 465–485 (AWTI…DFFI), and 492–512 (LFGF…IYLV).

Belongs to the NRAMP (TC 2.A.55) family.

Its subcellular location is the membrane. Its function is as follows. Probable divalent metal transporter. In Populus trichocarpa (Western balsam poplar), this protein is Metal transporter Nramp2.